We begin with the raw amino-acid sequence, 36 residues long: Pancreatic polypeptide (36 aa).

Residue tyrosine 36 is modified to Tyrosine amide.

This sequence belongs to the NPY family.

The protein resides in the secreted. Hormone secreted by pancreatic cells that acts as a regulator of pancreatic and gastrointestinal functions probably by signaling through the G protein-coupled receptor NPY4R2. In Didelphis virginiana (North American opossum), this protein is Pancreatic polypeptide (PPY).